The primary structure comprises 574 residues: K(+)/H(+) antiporter NhaP2 (574 aa).

Transmembrane regions (helical) follow at residues 6–26 (INSF…LSPM), 30–50 (LGIP…EDGL), 58–78 (YSTA…DGGM), 87–107 (VALW…TSIT), 109–129 (LMAA…GAIV), 173–193 (IAIL…VSFI), 196–216 (FGLG…LVNL), 219–239 (LAEG…YAVS), 242–262 (LGGS…NKPT), 271–291 (VLDG…GLLL), 299–319 (ILLP…PLAV), 335–355 (WFIS…VFPM), and 359–379 (LPGA…SLLI). An RCK C-terminal domain is found at 405 to 486 (SGVEIYPSSE…LDALSHLFSQ (82 aa)).

The protein belongs to the monovalent cation:proton antiporter 1 (CPA1) transporter (TC 2.A.36) family. NhaP2 subfamily.

It localises to the cell inner membrane. The enzyme catalyses K(+)(in) + H(+)(out) = K(+)(out) + H(+)(in). Functionally, k(+)/H(+) antiporter that extrudes potassium in exchange for external protons and maintains the internal concentration of potassium under toxic levels. The sequence is that of K(+)/H(+) antiporter NhaP2 from Shewanella sp. (strain W3-18-1).